The chain runs to 488 residues: Diacylglycerol kinase 3 (488 aa).

Residues 1-24 are disordered; sequence MDSPVSKTDASKEKFVASRPSTAD. A DAGKc domain is found at 87–245; that stretch reads APHAPMVVFI…SWKILVSMPS (159 aa).

This sequence belongs to the eukaryotic diacylglycerol kinase family. As to quaternary structure, monomer.

It catalyses the reaction a 1,2-diacyl-sn-glycerol + ATP = a 1,2-diacyl-sn-glycero-3-phosphate + ADP + H(+). In terms of biological role, phosphorylates the second messenger diacylglycerol (DAG) to generate phosphatidic acid (PA), another important signaling molecule. PA is required for plant development and responses to abiotic stress and pathogen attack. May be involved in the accumulation of PA during cold stress. The polypeptide is Diacylglycerol kinase 3 (DGK3) (Arabidopsis thaliana (Mouse-ear cress)).